The primary structure comprises 353 residues: Histidinol-phosphate aminotransferase (353 aa).

Lys218 bears the N6-(pyridoxal phosphate)lysine mark.

Belongs to the class-II pyridoxal-phosphate-dependent aminotransferase family. Histidinol-phosphate aminotransferase subfamily. As to quaternary structure, homodimer. Requires pyridoxal 5'-phosphate as cofactor.

It catalyses the reaction L-histidinol phosphate + 2-oxoglutarate = 3-(imidazol-4-yl)-2-oxopropyl phosphate + L-glutamate. Its pathway is amino-acid biosynthesis; L-histidine biosynthesis; L-histidine from 5-phospho-alpha-D-ribose 1-diphosphate: step 7/9. This Synechococcus sp. (strain JA-2-3B'a(2-13)) (Cyanobacteria bacterium Yellowstone B-Prime) protein is Histidinol-phosphate aminotransferase.